Consider the following 269-residue polypeptide: Hdr-like menaquinol oxidoreductase iron-sulfur subunit 1 (269 aa).

Positions 1–26 (MMSRRKFLLLTGAAAAGAILTPQISA) form a signal peptide, tat-type signal. [4Fe-4S] cluster contacts are provided by Cys-52, Cys-55, Cys-72, Cys-76, Cys-118, Cys-121, Cys-126, Cys-130, Cys-150, Cys-153, Cys-156, Cys-160, Cys-194, Cys-197, Cys-215, and Cys-219. Residues 141 to 170 (GIVEIDMHRCIGCRYCMIACPYGARCFNFI) form the 4Fe-4S ferredoxin-type domain.

Consists of five subunits: an integral membrane subunit, a cytochrome b-like subunit, a cytochrome c subunit and two iron-sulfur subunits. It depends on [4Fe-4S] cluster as a cofactor. Predicted to be exported by the Tat system. The position of the signal peptide cleavage has been experimentally proven.

The protein resides in the cell membrane. Has menaquinol-oxidizing activity. HmeA, HmeB and HmeE subunits may together catalyze electron transfer from menaquinol to cytochrome c. The sequence is that of Hdr-like menaquinol oxidoreductase iron-sulfur subunit 1 (hmeA) from Archaeoglobus fulgidus (strain ATCC 49558 / DSM 4304 / JCM 9628 / NBRC 100126 / VC-16).